Consider the following 497-residue polypeptide: MQNLNKTEKTFFGQPRGLLTLFQTEFWERFSYYGMRAILVYYLYALTTADNAGLGLPKAQAMAIVSIYGALVYLSTIVGGWVADRLLGASRTIFLGGILITLGHVALATPFGLSSLFVALFLIILGTGMLKPNISNMVGHLYSKDDSRRDTGFNIFVVGINMGSLIAPLIVGTVGQGVNYHLGFSLAAIGMIFALFAYWYGRLRHFPEIGREPSNPMDAKAKRNFIITLTIVLIVALIGFFLIYQASPANFINNFINVLSIIGIVVPIIYFVMMFTSKKVESDERRKLTAYIPLFLSAIVFWAIEEQSSTIIAVWGESRSNLNPTWFGFTFHIDPSWYQLLNPLFIVLLSPIFVRIWNKLGDRQPSTIVKFGLGLMLTGASYLIMTLPGLLNGTSGRASALWLVLMFAVQMAGELLVSPVGLSVSTKLAPVAFQSQMMAMWFLADSTSQAINAQITPIFKAATEVHFFAITGIIGIIVGIILLIIKKPILKLMGDVR.

Topologically, residues M1 to R36 are cytoplasmic. Residues A37–G55 form a helical membrane-spanning segment. Residues L56–I64 are Extracellular-facing. A helical transmembrane segment spans residues V65–A83. The Cytoplasmic portion of the chain corresponds to D84–T92. The chain crosses the membrane as a helical span at residues I93–F111. Topologically, residues G112–S115 are extracellular. Residues L116–I134 traverse the membrane as a helical segment. The Cytoplasmic portion of the chain corresponds to S135 to N154. Residues I155–T173 form a helical membrane-spanning segment. The Extracellular portion of the chain corresponds to V174 to H181. The helical transmembrane segment at L182–Y200 threads the bilayer. Residues G201 to N224 are Cytoplasmic-facing. A helical membrane pass occupies residues F225–I243. The Extracellular portion of the chain corresponds to Y244 to N254. Residues F255 to M273 traverse the membrane as a helical segment. Residues M274–P293 are Cytoplasmic-facing. The chain crosses the membrane as a helical span at residues L294–I312. Over A313–P335 the chain is Extracellular. The helical transmembrane segment at S336–V354 threads the bilayer. Residues R355–G372 are Cytoplasmic-facing. A helical membrane pass occupies residues L373–L391. The Extracellular segment spans residues N392 to S425. The helical transmembrane segment at T426–A444 threads the bilayer. Residues D445–R497 are Cytoplasmic-facing.

This sequence belongs to the major facilitator superfamily. Proton-dependent oligopeptide transporter (POT/PTR) (TC 2.A.17) family.

The protein resides in the cell membrane. Its function is as follows. Proton-dependent uptake of di- or tri-peptides. This chain is Di-/tripeptide transporter (dtpT), found in Lactococcus lactis subsp. cremoris (Streptococcus cremoris).